Here is a 467-residue protein sequence, read N- to C-terminus: Asparagine--tRNA ligase (467 aa).

Belongs to the class-II aminoacyl-tRNA synthetase family. In terms of assembly, homodimer.

It localises to the cytoplasm. The enzyme catalyses tRNA(Asn) + L-asparagine + ATP = L-asparaginyl-tRNA(Asn) + AMP + diphosphate + H(+). The protein is Asparagine--tRNA ligase of Baumannia cicadellinicola subsp. Homalodisca coagulata.